The primary structure comprises 148 residues: Transcription antitermination protein NusB (148 aa).

The protein belongs to the NusB family.

Involved in transcription antitermination. Required for transcription of ribosomal RNA (rRNA) genes. Binds specifically to the boxA antiterminator sequence of the ribosomal RNA (rrn) operons. The polypeptide is Transcription antitermination protein NusB (Saccharopolyspora erythraea (strain ATCC 11635 / DSM 40517 / JCM 4748 / NBRC 13426 / NCIMB 8594 / NRRL 2338)).